The sequence spans 166 residues: Small ribosomal subunit protein uS5 (166 aa).

An S5 DRBM domain is found at 11-74 (LQEKLVAVNR…EQARRNMVKV (64 aa)).

This sequence belongs to the universal ribosomal protein uS5 family. As to quaternary structure, part of the 30S ribosomal subunit. Contacts proteins S4 and S8.

With S4 and S12 plays an important role in translational accuracy. In terms of biological role, located at the back of the 30S subunit body where it stabilizes the conformation of the head with respect to the body. This chain is Small ribosomal subunit protein uS5, found in Tolumonas auensis (strain DSM 9187 / NBRC 110442 / TA 4).